The sequence spans 132 residues: Small ribosomal subunit protein uS8 (132 aa).

This sequence belongs to the universal ribosomal protein uS8 family. As to quaternary structure, part of the 30S ribosomal subunit. Contacts proteins S5 and S12.

Functionally, one of the primary rRNA binding proteins, it binds directly to 16S rRNA central domain where it helps coordinate assembly of the platform of the 30S subunit. This Streptomyces avermitilis (strain ATCC 31267 / DSM 46492 / JCM 5070 / NBRC 14893 / NCIMB 12804 / NRRL 8165 / MA-4680) protein is Small ribosomal subunit protein uS8.